Here is a 492-residue protein sequence, read N- to C-terminus: GDP-Man:Man(3)GlcNAc(2)-PP-Dol alpha-1,2-mannosyltransferase (492 aa).

Residues 1-19 (MAAGERSWCLCKLLRFFYS) lie on the Lumenal side of the membrane. A helical transmembrane segment spans residues 20–40 (LFFPGLIVCGTLCVCLVIVLW). Topologically, residues 41–233 (GIRLLLQRKK…TRNPFLSKVK (193 aa)) are cytoplasmic. The segment at residues 234–254 (LIYYYLFAFIYGLVGSCSDVV) is an intramembrane region (helical). Over 255-399 (MVNSSWTLNH…IGLHTMWNEH (145 aa)) the chain is Cytoplasmic. The segment at residues 400–420 (FGIGVVECMAAGTIILAHNSG) is an intramembrane region (helical). The Cytoplasmic segment spans residues 421–492 (GPKLDIVVPH…FLSSVEKLFK (72 aa)).

The protein belongs to the glycosyltransferase group 1 family. Glycosyltransferase 4 subfamily.

It localises to the endoplasmic reticulum membrane. It carries out the reaction an alpha-D-Man-(1-&gt;3)-[alpha-D-Man-(1-&gt;6)]-beta-D-Man-(1-&gt;4)-beta-D-GlcNAc-(1-&gt;4)-alpha-D-GlcNAc-diphospho-di-trans,poly-cis-dolichol + 2 GDP-alpha-D-mannose = an alpha-D-Man-(1-&gt;2)-alpha-D-Man-(1-&gt;2)-alpha-D-Man-(1-&gt;3)-[alpha-D-Man-(1-&gt;6)]-beta-D-Man-(1-&gt;4)-beta-D-GlcNAc-(1-&gt;4)-alpha-D-GlcNAc-diphospho-di-trans,poly-cis-dolichol + 2 GDP + 2 H(+). Its pathway is protein modification; protein glycosylation. GDP-Man:Man(3)GlcNAc(2)-PP-Dol alpha-1,2-mannosyltransferase that operates in the biosynthetic pathway of dolichol-linked oligosaccharides, the glycan precursors employed in protein asparagine (N)-glycosylation. The assembly of dolichol-linked oligosaccharides begins on the cytosolic side of the endoplasmic reticulum membrane and finishes in its lumen. The sequential addition of sugars to dolichol pyrophosphate produces dolichol-linked oligosaccharides containing fourteen sugars, including two GlcNAcs, nine mannoses and three glucoses. Once assembled, the oligosaccharide is transferred from the lipid to nascent proteins by oligosaccharyltransferases. Catalyzes, on the cytoplasmic face of the endoplasmic reticulum, the addition of the fourth and fifth mannose residues to the dolichol-linked oligosaccharide chain, to produce Man(5)GlcNAc(2)-PP-dolichol core oligosaccharide. Man(5)GlcNAc(2)-PP-dolichol is a substrate for ALG3, the following enzyme in the biosynthetic pathway. The protein is GDP-Man:Man(3)GlcNAc(2)-PP-Dol alpha-1,2-mannosyltransferase of Homo sapiens (Human).